The sequence spans 311 residues: Aspartate carbamoyltransferase catalytic subunit (311 aa).

Carbamoyl phosphate-binding residues include Arg-55 and Thr-56. Lys-85 contributes to the L-aspartate binding site. Arg-106, His-135, and Gln-138 together coordinate carbamoyl phosphate. Residues Arg-168 and Arg-230 each coordinate L-aspartate. Positions 268 and 269 each coordinate carbamoyl phosphate.

This sequence belongs to the aspartate/ornithine carbamoyltransferase superfamily. ATCase family. In terms of assembly, heterododecamer (2C3:3R2) of six catalytic PyrB chains organized as two trimers (C3), and six regulatory PyrI chains organized as three dimers (R2).

It catalyses the reaction carbamoyl phosphate + L-aspartate = N-carbamoyl-L-aspartate + phosphate + H(+). It functions in the pathway pyrimidine metabolism; UMP biosynthesis via de novo pathway; (S)-dihydroorotate from bicarbonate: step 2/3. Its function is as follows. Catalyzes the condensation of carbamoyl phosphate and aspartate to form carbamoyl aspartate and inorganic phosphate, the committed step in the de novo pyrimidine nucleotide biosynthesis pathway. The protein is Aspartate carbamoyltransferase catalytic subunit of Pectobacterium atrosepticum (strain SCRI 1043 / ATCC BAA-672) (Erwinia carotovora subsp. atroseptica).